The sequence spans 146 residues: Hemoglobin subunit beta (146 aa).

An N-acetylvaline modification is found at Val-1. Residues 2-146 (HLTAEEKSAV…VANALAHKYH (145 aa)) form the Globin domain. At Thr-12 the chain carries Phosphothreonine. Lys-59 is subject to N6-acetyllysine. His-63 contributes to the heme b binding site. N6-acetyllysine is present on Lys-82. His-92 contributes to the heme b binding site. An S-nitrosocysteine modification is found at Cys-93. Position 144 is an N6-acetyllysine (Lys-144).

The protein belongs to the globin family. Heterotetramer of two alpha chains and two beta chains. Red blood cells.

Involved in oxygen transport from the lung to the various peripheral tissues. This is Hemoglobin subunit beta (HBB) from Balaenoptera acutorostrata (Common minke whale).